Reading from the N-terminus, the 228-residue chain is Methylthioribulose-1-phosphate dehydratase (228 aa).

Cys-92 contacts substrate. His-110 and His-112 together coordinate Zn(2+). The Proton donor/acceptor role is filled by Glu-135. His-192 contributes to the Zn(2+) binding site.

It belongs to the aldolase class II family. MtnB subfamily. It depends on Zn(2+) as a cofactor.

Its subcellular location is the cytoplasm. It is found in the nucleus. It carries out the reaction 5-(methylsulfanyl)-D-ribulose 1-phosphate = 5-methylsulfanyl-2,3-dioxopentyl phosphate + H2O. Its pathway is amino-acid biosynthesis; L-methionine biosynthesis via salvage pathway; L-methionine from S-methyl-5-thio-alpha-D-ribose 1-phosphate: step 2/6. Functionally, catalyzes the dehydration of methylthioribulose-1-phosphate (MTRu-1-P) into 2,3-diketo-5-methylthiopentyl-1-phosphate (DK-MTP-1-P). The protein is Methylthioribulose-1-phosphate dehydratase of Schizosaccharomyces pombe (strain 972 / ATCC 24843) (Fission yeast).